Here is a 293-residue protein sequence, read N- to C-terminus: Phycoerythrin class 2 subunit gamma, linker polypeptide (293 aa).

Cysteine 49 provides a ligand contact to phycourobilin. In terms of domain architecture, PBS-linker spans 50–229; sequence AAMGIGIGPR…LGGMKVAISD (180 aa).

In terms of processing, contains one covalently linked phycourobilin chromophore.

The protein resides in the cellular thylakoid membrane. In terms of biological role, this protein is a bile pigment-bearing rod linker polypeptide that associates with C-phycoerythrin. This is Phycoerythrin class 2 subunit gamma, linker polypeptide (mpeC) from Synechococcus sp. (strain WH8020).